The chain runs to 1946 residues: 1,3-beta-glucan synthase component (1946 aa).

2 disordered regions span residues 1-127 (MSGY…FSDF) and 152-198 (YGEG…KEPY). Composition is skewed to low complexity over residues 24-34 (GYYQDDQYYDQ), 43-60 (GDHA…QGDG), and 91-109 (DDYY…NQGY). The span at 165–180 (QLSYGGNRSSGASTPN) shows a compositional bias: polar residues. N-linked (GlcNAc...) asparagine glycosylation is found at asparagine 171 and asparagine 290. The segment at 297 to 316 (KRKAKKGKKKGGEAGNEAET) is disordered. 6 helical membrane-spanning segments follow: residues 489-509 (WFHL…MFWF), 537-557 (FSIV…ATLA), 576-596 (LLFL…VFMF), 618-638 (IGIV…VMPL), 675-695 (FGLW…YLTL), and 734-754 (IVLI…TYLF). N-linked (GlcNAc...) asparagine glycans are attached at residues asparagine 1017 and asparagine 1312. 5 helical membrane-spanning segments follow: residues 1356-1376 (NMFI…IGAL), 1413-1433 (CIIS…VQEL), 1500-1520 (FAGQ…FATS), 1523-1543 (WQPA…SPFL), and 1615-1635 (IFLT…VAYL). A glycan (N-linked (GlcNAc...) asparagine) is linked at asparagine 1649. 5 helical membrane passes run 1667–1687 (LAVV…AMFG), 1703–1723 (FGPV…IIFF), 1738–1758 (LAGI…IVSL), 1803–1823 (FSAD…LILI), and 1864–1884 (AILY…PGVI). Asparagine 1918 carries an N-linked (GlcNAc...) asparagine glycan. The segment at 1920 to 1946 (TEGKTETGTKAGGADASATDASKLRLF) is disordered. The span at 1925–1940 (ETGTKAGGADASATDA) shows a compositional bias: low complexity.

This sequence belongs to the glycosyltransferase 48 family. As to quaternary structure, component of the 1,3-beta-glucan synthase (GS) complex composed of a catalytic subunit GLS1 and a regulatory subunit RHO1.

The protein resides in the membrane. Its subcellular location is the cell membrane. It catalyses the reaction [(1-&gt;3)-beta-D-glucosyl](n) + UDP-alpha-D-glucose = [(1-&gt;3)-beta-D-glucosyl](n+1) + UDP + H(+). With respect to regulation, activated by iron ions. Inhibited by manganese, copper and zinc ions. Catalytic subunit of the 1,3-beta-glucan synthase (GS). Synthesizes 1,3-beta-glucan, a major structural component of the fungal cell wall. Involved in cell wall synthesis, maintenance and remodeling. The chain is 1,3-beta-glucan synthase component from Cordyceps militaris (strain CM01) (Caterpillar fungus).